We begin with the raw amino-acid sequence, 371 residues long: Ferrochelatase (371 aa).

His-218 and Glu-299 together coordinate Fe cation.

Belongs to the ferrochelatase family.

It localises to the cytoplasm. The catalysed reaction is heme b + 2 H(+) = protoporphyrin IX + Fe(2+). Its pathway is porphyrin-containing compound metabolism; protoheme biosynthesis; protoheme from protoporphyrin-IX: step 1/1. Functionally, catalyzes the ferrous insertion into protoporphyrin IX. This chain is Ferrochelatase, found in Ralstonia nicotianae (strain ATCC BAA-1114 / GMI1000) (Ralstonia solanacearum).